A 198-amino-acid chain; its full sequence is MQITADMVKKLREMTGAGVMECKTALTEADGDFEKAVEVLRKRGAAVAQKKAGRLTKEGIVTSYIHFNDKIGVLLELGCETDFVARMPEFKELAYNLAKHVAAMNPKYVTREDVPEEVLEKEKEIYRAQLENSNKPAAVVEKIVQGKLEKFYEEVCLYDQKYIFDDEKTVKEVVDELIGKIRENIRVTRFVRMRVGEE.

The segment at 81–84 (TDFV) is involved in Mg(2+) ion dislocation from EF-Tu.

Belongs to the EF-Ts family.

Its subcellular location is the cytoplasm. In terms of biological role, associates with the EF-Tu.GDP complex and induces the exchange of GDP to GTP. It remains bound to the aminoacyl-tRNA.EF-Tu.GTP complex up to the GTP hydrolysis stage on the ribosome. This Pseudothermotoga lettingae (strain ATCC BAA-301 / DSM 14385 / NBRC 107922 / TMO) (Thermotoga lettingae) protein is Elongation factor Ts.